The chain runs to 160 residues: UPF0178 protein PA5247 (160 aa).

This sequence belongs to the UPF0178 family.

This Pseudomonas aeruginosa (strain ATCC 15692 / DSM 22644 / CIP 104116 / JCM 14847 / LMG 12228 / 1C / PRS 101 / PAO1) protein is UPF0178 protein PA5247.